Here is a 362-residue protein sequence, read N- to C-terminus: MQLEIQVALNFIISYLYNKLPRRRVNIFGEELERLLKKKYEGHWYPEKPYKGSGFRCIHVGEKVDPVIEQASKESGLDIDDVRGNLPQDLSVWIDPFEVSYQIGEKGPVKVLYVDDSSETGCELDKEIKNSFNPEAQVFMPISDPASSVSSSPSPPFGHSAAVSPTFMPRSTQPLTFTTATFAATKFGSTKMKNSGRSSKVARTSPINLGLTVNVNDLLKQKAISSSVHSLYGLGLGSQQQPQPQPQQQQQQQPSSSQPPPPLPQQQQQQPQQQQQQQQQTSALSPNAKEFIFPNMQGQGSSTNGMFPGDSPLNLSPLQYSNAFDVFAAYGGLNEKSFVDGLNFSLNNMQYSNQQFQPVMAN.

The Bipartite nuclear localization signal signature appears at 22–39 (RRRVNIFGEELERLLKKK). Residues 82–92 (VRGNLPQDLSV) are important for nuclear localization. Residues 144-160 (DPASSVSSSPSPPFGHS) show a composition bias toward low complexity. The tract at residues 144–171 (DPASSVSSSPSPPFGHSAAVSPTFMPRS) is disordered. The required for interaction with CPEB3 stretch occupies residues 161 to 220 (AAVSPTFMPRSTQPLTFTTATFAATKFGSTKMKNSGRSSKVARTSPINLGLTVNVNDLLK). Phosphothreonine is present on threonine 204. The Nuclear export signal motif lies at 228 to 236 (VHSLYGLGL). The segment at 234–284 (LGLGSQQQPQPQPQQQQQQQPSSSQPPPPLPQQQQQQPQQQQQQQQQTSAL) is disordered. 2 stretches are compositionally biased toward low complexity: residues 238–256 (SQQQ…QPSS) and 265–280 (QQQQ…QQQQ).

This sequence belongs to the BTG family. Interacts with ERBB2. Interacts with CNOT7. Interacts with CPEB3 (via C-terminal RNA-binding region); recruits CNOT7 to CPEB3 to form a ternary complex required for mRNA deadenylation and decay. Interacts with CNOT8. Interacts with CPEB4. Post-translationally, phosphorylated on Ser and Thr residues. As to expression, ubiquitous.

The protein localises to the cytoplasm. The protein resides in the nucleus. Anti-proliferative protein; the function is mediated by association with deadenylase subunits of the CCR4-NOT complex. Mediates CPEB3-accelerated mRNA deadenylation by binding to CPEB3 and recruiting CNOT7 which leads to target mRNA deadenylation and decay. The sequence is that of Protein Tob1 (Tob1) from Mus musculus (Mouse).